Here is a 255-residue protein sequence, read N- to C-terminus: Type III pantothenate kinase (255 aa).

Position 6-13 (6-13) interacts with ATP; sequence DVGNTNTV. Residues Tyr100 and 107–110 contribute to the substrate site; that span reads GADR. The Proton acceptor role is filled by Asp109. Residue Asp129 participates in K(+) binding. Thr132 is an ATP binding site. Position 184 (Thr184) interacts with substrate.

This sequence belongs to the type III pantothenate kinase family. In terms of assembly, homodimer. NH4(+) serves as cofactor. K(+) is required as a cofactor.

Its subcellular location is the cytoplasm. It catalyses the reaction (R)-pantothenate + ATP = (R)-4'-phosphopantothenate + ADP + H(+). Its pathway is cofactor biosynthesis; coenzyme A biosynthesis; CoA from (R)-pantothenate: step 1/5. Catalyzes the phosphorylation of pantothenate (Pan), the first step in CoA biosynthesis. This Syntrophotalea carbinolica (strain DSM 2380 / NBRC 103641 / GraBd1) (Pelobacter carbinolicus) protein is Type III pantothenate kinase.